Here is a 299-residue protein sequence, read N- to C-terminus: Trans-aconitate 3-methyltransferase (299 aa).

S2 is subject to N-acetylserine.

Belongs to the methyltransferase superfamily. Tam family.

It localises to the cytoplasm. It carries out the reaction trans-aconitate + S-adenosyl-L-methionine = (E)-2-(methoxycarbonylmethyl)but-2-enedioate + S-adenosyl-L-homocysteine. In terms of biological role, catalyzes the S-adenosylmethionine monomethyl esterification of trans-aconitate and 3-isopropylmalate at high affinity and of other molecules like cis-aconitate, isocitrate, and citrate at lower velocities and affinities. The function of trans-aconitate methylation appears to be in reducing the toxicity of this spontaneous breakdown product of cis-aconitate. The role of 3-isopropylmalate methylation is unclear but may represent a metabolic branch at 3-isopropylmalate, where some of the material is taken in the pathway leading to leucine and some is taken in a pathway to the 3-isopropylmalate methyl ester, a molecule that provides a signal to switch from vegetative to invasive growth in response to amino acid starvation. This is Trans-aconitate 3-methyltransferase (TMT1) from Saccharomyces cerevisiae (strain ATCC 204508 / S288c) (Baker's yeast).